The sequence spans 521 residues: Cytochrome P450 monooxygenase sdnF (521 aa).

The chain crosses the membrane as a helical span at residues Tyr19–Ile39. N-linked (GlcNAc...) asparagine glycosylation is found at Asn178, Asn186, Asn191, Asn309, and Asn416. Residue Cys460 participates in heme binding.

It belongs to the cytochrome P450 family. Heme is required as a cofactor.

The protein localises to the membrane. It functions in the pathway antibiotic biosynthesis. Cytochrome P450 monooxygenase; part of the gene cluster that mediates the biosynthesis of sordarin and hypoxysordarin, glycoside antibiotics with a unique tetracyclic diterpene aglycone structure. First, the geranylgeranyl diphosphate synthase sdnC constructs GGDP from farnesyl diphosphate and isopentenyl diphosphate. The diterpene cyclase sdnA then catalyzes the cyclization of GGDP to afford cycloaraneosene. Cycloaraneosene is then hydroxylated four times by the putative cytochrome P450 monooxygenases sdnB, sdnE, sdnF and sdnH to give a hydroxylated cycloaraneosene derivative such as cycloaraneosene-8,9,13,19-tetraol. Although the order of the hydroxylations is unclear, at least C8, C9 and C13 of the cycloaraneosene skeleton are hydroxylated before the sordaricin formation. Dehydration of the 13-hydroxy group of the hydroxylated cycloaraneosene derivative might be catalyzed by an unassigned hypothetical protein such as sdnG and sdnP to construct the cyclopentadiene moiety. The FAD-dependent oxidoreductase sdnN is proposed to catalyze the oxidation at C9 of the hydroxylated cycloaraneosene derivative and also catalyze the Baeyer-Villiger oxidation to give the lactone intermediate. The presumed lactone intermediate would be hydrolyzed to give an acrolein moiety and a carboxylate moiety. Then, [4+2]cycloaddition would occur between the acrolein moiety and the cyclopentadiene moiety to give sordaricin. SdnN might also be involved in the [4+2]cycloaddition after the hypothesized oxidation to accommodate the oxidized product and prompt the [4+2]cycloaddition. GDP-6-deoxy-D-altrose may be biosynthesized from GDP-D-mannose by the putative GDP-mannose-4,6-dehydratase sdnI and the short-chain dehydrogenase sdnK. The glycosyltransferase sdnJ catalyzes the attachment of 6-deoxy-D-altrose onto the 19-hydroxy group of sordaricin to give 4'-O-demethylsordarin. The methyltransferase sdnD would complete the biosynthesis of sordarin. Sordarin can be further modified into hypoxysordarin. The unique acyl chain at the 3'-hydroxy group of hypoxysordarin would be constructed by an iterative type I PKS sdnO and the trans-acting polyketide methyltransferase sdnL. SdnL would be responsible for the introduction of an alpha-methyl group of the polyketide chain. Alternatively, the beta-lactamase-like protein sdnR might be responsible for the cleavage and transfer of the polyketide chain from the PKS sdnO to sordarin. Two putative cytochrome P450 monooxygenases, sdnQ and sdnT, might catalyze the epoxidations of the polyketide chain to complete the biosynthesis of hypoxysordarin. Transcriptional regulators sdnM and sdnS are presumably encoded for the transcriptional regulation of the expression of the sdn gene cluster. The polypeptide is Cytochrome P450 monooxygenase sdnF (Sordaria araneosa (Pleurage araneosa)).